The primary structure comprises 610 residues: UvrABC system protein C (610 aa).

The 79-residue stretch at 16–94 (SQPGVYRMYD…IKLYQPRYNV (79 aa)) folds into the GIY-YIG domain. Residues 204–239 (QQVLHQLIERMENASKALNFEEAARIRDQIQAVRRV) form the UVR domain.

This sequence belongs to the UvrC family. Interacts with UvrB in an incision complex.

It localises to the cytoplasm. The UvrABC repair system catalyzes the recognition and processing of DNA lesions. UvrC both incises the 5' and 3' sides of the lesion. The N-terminal half is responsible for the 3' incision and the C-terminal half is responsible for the 5' incision. The sequence is that of UvrABC system protein C from Serratia proteamaculans (strain 568).